The sequence spans 334 residues: MSEPSAKKQKFANSLEALKATGTTVVADTGDFESIAKFTPQDATTNPSLILAAAKQQAYAKLIDSAVQYGKKQGQNIDEQVEIAVDKLLVEFGTAILKVVPGRVSTEVDARLSFDKDATVKKALEIIKLYEAEGISKDRVLIKIASTWEGIQAAQELEKEHDIHVNLTLLFSFAQAVAAAEANVTLISPFVGRILDWYKASTGETYTAETDPGVISVKSIYNYYKKHGYNTIVMGASFRNVGEIKALAGVDFLTISPKLLDELLSSDEPVAKILDPESAKAEGSERVSFINDEPKFRFELNEDAMATEKLSEGIRKFSADIVTLFDLIKAKIQA.

An N-acetylserine modification is found at Ser2. The active-site Schiff-base intermediate with substrate is the Lys143.

It belongs to the transaldolase family. Type 1 subfamily. In terms of assembly, homodimer.

The catalysed reaction is D-sedoheptulose 7-phosphate + D-glyceraldehyde 3-phosphate = D-erythrose 4-phosphate + beta-D-fructose 6-phosphate. Its pathway is carbohydrate degradation; pentose phosphate pathway; D-glyceraldehyde 3-phosphate and beta-D-fructose 6-phosphate from D-ribose 5-phosphate and D-xylulose 5-phosphate (non-oxidative stage): step 2/3. Its function is as follows. Transaldolase is important for the balance of metabolites in the pentose-phosphate pathway. The chain is Transaldolase (TAL1) from Kluyveromyces lactis (strain ATCC 8585 / CBS 2359 / DSM 70799 / NBRC 1267 / NRRL Y-1140 / WM37) (Yeast).